The following is a 313-amino-acid chain: Ribosomal RNA small subunit methyltransferase H (313 aa).

Residues 31 to 33 (GGH), Asp51, Phe77, Asp95, and Gln102 each bind S-adenosyl-L-methionine.

It belongs to the methyltransferase superfamily. RsmH family.

Its subcellular location is the cytoplasm. The catalysed reaction is cytidine(1402) in 16S rRNA + S-adenosyl-L-methionine = N(4)-methylcytidine(1402) in 16S rRNA + S-adenosyl-L-homocysteine + H(+). Specifically methylates the N4 position of cytidine in position 1402 (C1402) of 16S rRNA. This Xylella fastidiosa (strain 9a5c) protein is Ribosomal RNA small subunit methyltransferase H.